The primary structure comprises 321 residues: tRNA(Ile)-lysidine synthase (321 aa).

30 to 35 (SGGSDS) is a binding site for ATP.

The protein belongs to the tRNA(Ile)-lysidine synthase family.

The protein localises to the cytoplasm. The enzyme catalyses cytidine(34) in tRNA(Ile2) + L-lysine + ATP = lysidine(34) in tRNA(Ile2) + AMP + diphosphate + H(+). Functionally, ligates lysine onto the cytidine present at position 34 of the AUA codon-specific tRNA(Ile) that contains the anticodon CAU, in an ATP-dependent manner. Cytidine is converted to lysidine, thus changing the amino acid specificity of the tRNA from methionine to isoleucine. This chain is tRNA(Ile)-lysidine synthase, found in Chlamydia trachomatis serovar D (strain ATCC VR-885 / DSM 19411 / UW-3/Cx).